Here is a 499-residue protein sequence, read N- to C-terminus: Fumarate hydratase 2 (499 aa).

A disordered region spans residues 19–51 (ADVTLKQEDEQQERRSYSTPFREERDTFGPIQV). Positions 23–45 (LKQEDEQQERRSYSTPFREERDT) are enriched in basic and acidic residues. Substrate-binding positions include 134–136 (SGT), 164–167 (HPND), 174–176 (SSN), and T222. Catalysis depends on H223, which acts as the Proton donor/acceptor. S353 is an active-site residue. Residues S354 and 359–361 (KVN) contribute to the substrate site.

It belongs to the class-II fumarase/aspartase family. Fumarase subfamily. As to quaternary structure, homotetramer.

The protein localises to the cytoplasm. The protein resides in the cytosol. It carries out the reaction (S)-malate = fumarate + H2O. With respect to regulation, fumarate hydratase activity (fumarate to L-malate) is strongly inhibited by phosphoenolpyruvate, citrate, oxaloacetate, ATP and ADP. Malate dehydratase activity (malate to fumarate) is activated by oxaloacetate, Asn and Gln. Malate dehydratase activity (malate to fumarate) is inhibited by citrate, succinate, ADP and ATP. Its function is as follows. Cytosolic fumarate hydratase that catalyzes the reversible stereospecific interconversion of fumarate to L-malate. Catalyzes the dehydration of L-malate to fumarate in the cytosol: required for the massive fumarate accumulation during the day in plants grown under high nitrogen. Also required for acclimation of photosynthesis to cold: acts by mediating accumulation of fumarate at low temperature, leading to reduce accumulation of phosphorylated sugars. This chain is Fumarate hydratase 2, found in Arabidopsis thaliana (Mouse-ear cress).